The chain runs to 621 residues: KIF-binding protein (621 aa).

Ser178 carries the post-translational modification Phosphoserine.

This sequence belongs to the KIF-binding protein family. Interacts with KIF1B; positively regulates KIF1B microtubule motor activity. Interacts with STMN2.

Its subcellular location is the cytoplasm. It localises to the cytoskeleton. In terms of biological role, activator of KIF1B plus-end-directed microtubule motor activity. Required for organization of axonal microtubules, and axonal outgrowth and maintenance during peripheral and central nervous system development. This Bos taurus (Bovine) protein is KIF-binding protein (KIFBP).